An 82-amino-acid chain; its full sequence is Diptericin-A (82 aa).

Disordered stretches follow at residues 1–32 and 45–69; these read DEKP…DGFG and DNGG…GNSR. F82 is subject to Phenylalanine amide.

The protein belongs to the attacin/sarcotoxin-2 family.

The protein resides in the secreted. Its function is as follows. Antimicrobial peptide required to resist Gram-negative bacterial infections, regulated by Dredd. The sequence is that of Diptericin-A from Protophormia terraenovae (Northern blowfly).